An 859-amino-acid polypeptide reads, in one-letter code: DNA mismatch repair protein MutS (859 aa).

622–629 (GPNMGGKS) contributes to the ATP binding site.

This sequence belongs to the DNA mismatch repair MutS family.

Functionally, this protein is involved in the repair of mismatches in DNA. It is possible that it carries out the mismatch recognition step. This protein has a weak ATPase activity. This is DNA mismatch repair protein MutS from Coxiella burnetii (strain RSA 493 / Nine Mile phase I).